The sequence spans 244 residues: Lipoprotein-releasing system ATP-binding protein LolD (244 aa).

Residues 19 to 244 (IRAEALAKTY…KLRELAPSAV (226 aa)) form the ABC transporter domain. 55 to 62 (GASGAGKS) contributes to the ATP binding site.

The protein belongs to the ABC transporter superfamily. Lipoprotein translocase (TC 3.A.1.125) family. In terms of assembly, the complex is composed of two ATP-binding proteins (LolD) and two transmembrane proteins (LolC and LolE).

It localises to the cell inner membrane. Its function is as follows. Part of the ABC transporter complex LolCDE involved in the translocation of mature outer membrane-directed lipoproteins, from the inner membrane to the periplasmic chaperone, LolA. Responsible for the formation of the LolA-lipoprotein complex in an ATP-dependent manner. This is Lipoprotein-releasing system ATP-binding protein LolD from Xanthomonas euvesicatoria pv. vesicatoria (strain 85-10) (Xanthomonas campestris pv. vesicatoria).